Reading from the N-terminus, the 199-residue chain is Prefoldin subunit 3 (199 aa).

Met1 is subject to N-acetylmethionine.

Belongs to the prefoldin subunit alpha family. Heterohexamer of two PFD-alpha type and four PFD-beta type subunits.

In terms of biological role, binds specifically to cytosolic chaperonin (c-CPN) and transfers target proteins to it. Binds to nascent polypeptide chain and promotes folding in an environment in which there are many competing pathways for nonnative proteins. The protein is Prefoldin subunit 3 (PAC10) of Saccharomyces cerevisiae (strain ATCC 204508 / S288c) (Baker's yeast).